We begin with the raw amino-acid sequence, 1089 residues long: Platelet-derived growth factor receptor alpha (1089 aa).

Positions 1–24 (MGTSHQVFLVLSCLLTGPGLISCQ) are cleaved as a signal peptide. 5 Ig-like C2-type domains span residues 25–113 (LLLP…SEIE), 117–201 (IYIY…FKTS), 202–306 (EFNV…KRVT), 319–410 (PTFG…FELS), and 414–517 (PASI…LKLV). Residues 25 to 528 (LLLPSILPNE…PTLRSELTVA (504 aa)) are Extracellular-facing. Asn-42, Asn-76, Asn-89, Asn-103, and Asn-179 each carry an N-linked (GlcNAc...) asparagine glycan. Cys-49 and Cys-100 form a disulfide bridge. 2 disulfide bridges follow: Cys-150/Cys-189 and Cys-235/Cys-290. N-linked (GlcNAc...) asparagine glycans are attached at residues Asn-353, Asn-359, Asn-458, Asn-468, and Asn-506. A disulfide bridge links Cys-435 with Cys-501. A helical transmembrane segment spans residues 529-549 (AAVLVLLVIVIVSLIVLVVIW). The Cytoplasmic segment spans residues 550–1089 (KQKPRYEIRW…SSDLVEDSFL (540 aa)). Residues Tyr-572 and Tyr-574 each carry the phosphotyrosine; by autocatalysis modification. Positions 593–954 (LVLGRILGSG…HLSEIVENLL (362 aa)) constitute a Protein kinase domain. ATP-binding positions include 599 to 607 (LGSGAFGKV) and Lys-627. 6 positions are modified to phosphotyrosine; by autocatalysis: Tyr-720, Tyr-731, Tyr-742, Tyr-754, Tyr-762, and Tyr-768. Asp-818 (proton acceptor) is an active-site residue. Phosphotyrosine; by autocatalysis occurs at positions 849, 988, and 1018. Residues 1018-1089 (YIIPLPDIDP…SSDLVEDSFL (72 aa)) are disordered. Residues 1041 to 1059 (SSQTSEESAIETGSSSSTF) are compositionally biased toward polar residues. Acidic residues predominate over residues 1065–1089 (ETIEDIDMMDDIGIDSSDLVEDSFL).

The protein belongs to the protein kinase superfamily. Tyr protein kinase family. CSF-1/PDGF receptor subfamily. As to quaternary structure, interacts with homodimeric PDGFA, PDGFB and PDGFC, and with heterodimers formed by PDGFA and PDGFB. Monomer in the absence of bound ligand. Interaction with dimeric PDGFA, PDGFB and/or PDGFC leads to receptor dimerization, where both PDGFRA homodimers and heterodimers with PDGFRB are observed. Interacts (tyrosine phosphorylated) with SHB (via SH2 domain). Interacts (tyrosine phosphorylated) with SHF (via SH2 domain). Interacts (tyrosine phosphorylated) with SRC (via SH2 domain). Interacts (tyrosine phosphorylated) with PIK3R1. Interacts (tyrosine phosphorylated) with PLCG1 (via SH2 domain). Interacts (tyrosine phosphorylated) with CRK, GRB2 and GRB7. Interacts with CD248; this interaction promotes PDGF receptor signaling pathway. In terms of processing, ubiquitinated, leading to its internalization and degradation. Autophosphorylated on tyrosine residues upon ligand binding. Autophosphorylation occurs in trans, i.e. one subunit of the dimeric receptor phosphorylates tyrosine residues on the other subunit. Phosphorylation at Tyr-731 and Tyr-742 is important for interaction with PIK3R1. Phosphorylation at Tyr-720 and Tyr-754 is important for interaction with PTPN11. Phosphorylation at Tyr-762 is important for interaction with CRK. Phosphorylation at Tyr-572 and Tyr-574 is important for interaction with SRC and SRC family members. Phosphorylation at Tyr-988 and Tyr-1018 is important for interaction with PLCG1. As to expression, focally expressed in cortical interstitial cells and highly expressed in the interstitium of the papillary region. Also expressed by adventitial cells in arterial vessels. Up-regulated in areas of renal fibrosis. In mice with unilateral ureteral obstruction, expression in cortical interstitial cells becomes prominent at day 4 which increases progressively until day 14.

It is found in the cell membrane. The protein localises to the cell projection. It localises to the cilium. The protein resides in the golgi apparatus. It carries out the reaction L-tyrosyl-[protein] + ATP = O-phospho-L-tyrosyl-[protein] + ADP + H(+). Its activity is regulated as follows. Present in an inactive conformation in the absence of bound ligand. Binding of PDGFA and/or PDGFB leads to dimerization and activation by autophosphorylation on tyrosine residues. Inhibited by imatinib, nilotinib and sorafenib. Tyrosine-protein kinase that acts as a cell-surface receptor for PDGFA, PDGFB and PDGFC and plays an essential role in the regulation of embryonic development, cell proliferation, survival and chemotaxis. Depending on the context, promotes or inhibits cell proliferation and cell migration. Plays an important role in the differentiation of bone marrow-derived mesenchymal stem cells. Required for normal skeleton development and cephalic closure during embryonic development. Required for normal development of the mucosa lining the gastrointestinal tract, and for recruitment of mesenchymal cells and normal development of intestinal villi. Plays a role in cell migration and chemotaxis in wound healing. Plays a role in platelet activation, secretion of agonists from platelet granules, and in thrombin-induced platelet aggregation. Binding of its cognate ligands - homodimeric PDGFA, homodimeric PDGFB, heterodimers formed by PDGFA and PDGFB or homodimeric PDGFC -leads to the activation of several signaling cascades; the response depends on the nature of the bound ligand and is modulated by the formation of heterodimers between PDGFRA and PDGFRB. Phosphorylates PIK3R1, PLCG1, and PTPN11. Activation of PLCG1 leads to the production of the cellular signaling molecules diacylglycerol and inositol 1,4,5-trisphosphate, mobilization of cytosolic Ca(2+) and the activation of protein kinase C. Phosphorylates PIK3R1, the regulatory subunit of phosphatidylinositol 3-kinase, and thereby mediates activation of the AKT1 signaling pathway. Mediates activation of HRAS and of the MAP kinases MAPK1/ERK2 and/or MAPK3/ERK1. Promotes activation of STAT family members STAT1, STAT3 and STAT5A and/or STAT5B. Receptor signaling is down-regulated by protein phosphatases that dephosphorylate the receptor and its down-stream effectors, and by rapid internalization of the activated receptor. The polypeptide is Platelet-derived growth factor receptor alpha (Pdgfra) (Mus musculus (Mouse)).